Consider the following 710-residue polypeptide: Adenylosuccinate synthetase (710 aa).

Disordered stretches follow at residues 1–51 (MPVR…PVPQ) and 84–111 (DEPP…GRSK). 2 stretches are compositionally biased toward polar residues: residues 10–27 (YNNS…STTA) and 101–111 (ANASSSSGRSK). GTP-binding positions include 180–186 (GDEGKGK) and 210–212 (GHT). D181 acts as the Proton acceptor in catalysis. D181 and G210 together coordinate Mg(2+). IMP is bound by residues 181 to 184 (DEGK), 208 to 211 (NAGH), T295, K309, Q421, T437, and K567. H211 acts as the Proton donor in catalysis. 563-569 (AVTKKPR) lines the substrate pocket. Residues R569 and 697 to 699 (GNG) contribute to the GTP site.

This sequence belongs to the adenylosuccinate synthetase family. In terms of assembly, homodimer. Mg(2+) serves as cofactor.

The protein resides in the cytoplasm. The catalysed reaction is IMP + L-aspartate + GTP = N(6)-(1,2-dicarboxyethyl)-AMP + GDP + phosphate + 2 H(+). The protein operates within purine metabolism; AMP biosynthesis via de novo pathway; AMP from IMP: step 1/2. Plays an important role in the salvage pathway for purine nucleotide biosynthesis. Catalyzes the first committed step in the biosynthesis of AMP from IMP. The protein is Adenylosuccinate synthetase of Leishmania infantum.